The following is a 471-amino-acid chain: Tryptophanase (471 aa).

An N6-acetyllysine mark is found at Lys-5, Lys-115, and Lys-156. Lys-270 bears the N6-(pyridoxal phosphate)lysine mark. Position 450 is an N6-acetyllysine (Lys-450).

It belongs to the beta-eliminating lyase family. Homotetramer. Pyridoxal 5'-phosphate serves as cofactor.

The enzyme catalyses L-tryptophan + H2O = indole + pyruvate + NH4(+). The protein operates within amino-acid degradation; L-tryptophan degradation via pyruvate pathway; indole and pyruvate from L-tryptophan: step 1/1. The polypeptide is Tryptophanase (tnaA) (Escherichia coli O157:H7).